We begin with the raw amino-acid sequence, 257 residues long: Acetylglutamate kinase (257 aa).

Residues 43–44, Arg-65, and Asn-157 contribute to the substrate site; that span reads GG. ATP is bound by residues 180–185 and 208–210; these read DISSIL and IIT.

The protein belongs to the acetylglutamate kinase family. ArgB subfamily. As to quaternary structure, homodimer.

It is found in the cytoplasm. The catalysed reaction is N-acetyl-L-glutamate + ATP = N-acetyl-L-glutamyl 5-phosphate + ADP. It participates in amino-acid biosynthesis; L-arginine biosynthesis; N(2)-acetyl-L-ornithine from L-glutamate: step 2/4. Functionally, catalyzes the ATP-dependent phosphorylation of N-acetyl-L-glutamate. This is Acetylglutamate kinase from Buchnera aphidicola subsp. Acyrthosiphon pisum (strain Tuc7).